The following is a 677-amino-acid chain: mRNA export factor Gle1 (677 aa).

Positions 34–48 (EDREPIWVEGSRKTP) are enriched in basic and acidic residues. Disordered stretches follow at residues 34 to 65 (EDRE…NNEI), 113 to 136 (KQDA…DQLQ), and 294 to 366 (ERQR…ATST). Over residues 49-60 (EPPLPEESPAPE) the composition is skewed to pro residues. Coiled coils occupy residues 122–179 (ETQQ…QKLH) and 280–346 (QQQL…AANV). Over residues 294-340 (ERQRQQQQEEERQKLEEQQKLEEQEKLRKEKEESAAKEKQQEAETAK) the composition is skewed to basic and acidic residues.

Belongs to the GLE1 family. In terms of assembly, may associate with the NPC.

The protein localises to the cytoplasm. It is found in the nucleus. The protein resides in the nuclear pore complex. Functionally, required for the export of mRNAs containing poly(A) tails from the nucleus into the cytoplasm. May be involved in the terminal step of the mRNA transport through the nuclear pore complex (NPC). This chain is mRNA export factor Gle1, found in Drosophila melanogaster (Fruit fly).